Here is a 336-residue protein sequence, read N- to C-terminus: Mitochondrial import receptor subunit TOM40 homolog (336 aa).

The segment at 1-58 (MGNVLAASSPAPPAAGSPPAPGLVSVPPGFTMPPVAGLTPTPDKKETQEDRLPNPGTF) is disordered. Pro residues predominate over residues 10 to 21 (PAPPAAGSPPAP). Over residues 42–52 (PDKKETQEDRL) the composition is skewed to basic and acidic residues.

This sequence belongs to the Tom40 family. As to quaternary structure, forms part of the preprotein translocase complex of the outer mitochondrial membrane (TOM complex). Interacts with mitochondrial targeting sequences.

The protein localises to the mitochondrion outer membrane. In terms of biological role, channel-forming protein essential for import of protein precursors into mitochondria. In Xenopus tropicalis (Western clawed frog), this protein is Mitochondrial import receptor subunit TOM40 homolog (tomm40).